The sequence spans 672 residues: MTSITHAELGWNEVGTPVSDQFDDVYFSNVNGLEETRYVFLKQNLIPERWQEFDRRRFVIGETGFGTGLNFLAVWQAFNDFRRANPDATLKELHFVSFEKFPLSKQDLIKAHQAWPELAELAEKLHRHYPPAVPECHRIVLDNGAVTLDLWLGDIKDCLPSVPYGEEGIIDTWFLDGFAPSKNPEMWNQDLFNGMAKLARSECRVATFTSAGFVRRGLIEAGFAMKKVKGFGTKREMIAGCMETRQQQSRHAPYFNRTSASHLDSIAIIGGGIASAALAKALVQRGQKVTLYCKHAQAAEGASGNRQGAVYPLLNGNHDGVSRVFAPAFLFARQFVEQAAQALTFDHDWCGVTQLMWDEKSTNKLDKMLSGNFAPELIQKLSVGETAAKIGLPIDMASVHYPLGGWLCPAELTQALFTQLGTLDNFTAKFEQSVEQLIWDERSQQWQVHTQGQHDTYSAVVIANGHEFQTFSQTADIPLGQVKGQVSHVPATETLSKLKSVLCYDGYMTPVNPNNQHLCIGASYDRRHLDTEFDVNAQQENAERLTQCVPNQAWAKEVDTSGNLSRQGIRCVSRDHLPFVGNVGDFSAIKRQYADLPHTQAEEIEVISQFPNLFCLLGLGSRGLSSAPLMAELLASQICNDPLPLPVDVLEELHPSRMWVRKLRKGKAITEL.

The tract at residues 1–243 (MTSITHAELG…KREMIAGCME (243 aa)) is tRNA (mnm(5)s(2)U34)-methyltransferase. The segment at 269 to 672 (IGGGIASAAL…LRKGKAITEL (404 aa)) is FAD-dependent cmnm(5)s(2)U34 oxidoreductase.

It in the N-terminal section; belongs to the methyltransferase superfamily. tRNA (mnm(5)s(2)U34)-methyltransferase family. The protein in the C-terminal section; belongs to the DAO family. FAD serves as cofactor.

The protein resides in the cytoplasm. It catalyses the reaction 5-aminomethyl-2-thiouridine(34) in tRNA + S-adenosyl-L-methionine = 5-methylaminomethyl-2-thiouridine(34) in tRNA + S-adenosyl-L-homocysteine + H(+). In terms of biological role, catalyzes the last two steps in the biosynthesis of 5-methylaminomethyl-2-thiouridine (mnm(5)s(2)U) at the wobble position (U34) in tRNA. Catalyzes the FAD-dependent demodification of cmnm(5)s(2)U34 to nm(5)s(2)U34, followed by the transfer of a methyl group from S-adenosyl-L-methionine to nm(5)s(2)U34, to form mnm(5)s(2)U34. This Vibrio vulnificus (strain CMCP6) protein is tRNA 5-methylaminomethyl-2-thiouridine biosynthesis bifunctional protein MnmC.